The primary structure comprises 490 residues: Aspartyl/glutamyl-tRNA(Asn/Gln) amidotransferase subunit B (490 aa).

Belongs to the GatB/GatE family. GatB subfamily. In terms of assembly, heterotrimer of A, B and C subunits.

The catalysed reaction is L-glutamyl-tRNA(Gln) + L-glutamine + ATP + H2O = L-glutaminyl-tRNA(Gln) + L-glutamate + ADP + phosphate + H(+). It catalyses the reaction L-aspartyl-tRNA(Asn) + L-glutamine + ATP + H2O = L-asparaginyl-tRNA(Asn) + L-glutamate + ADP + phosphate + 2 H(+). In terms of biological role, allows the formation of correctly charged Asn-tRNA(Asn) or Gln-tRNA(Gln) through the transamidation of misacylated Asp-tRNA(Asn) or Glu-tRNA(Gln) in organisms which lack either or both of asparaginyl-tRNA or glutaminyl-tRNA synthetases. The reaction takes place in the presence of glutamine and ATP through an activated phospho-Asp-tRNA(Asn) or phospho-Glu-tRNA(Gln). The sequence is that of Aspartyl/glutamyl-tRNA(Asn/Gln) amidotransferase subunit B from Burkholderia pseudomallei (strain K96243).